The sequence spans 122 residues: Double-headed protease inhibitor, submandibular gland (122 aa).

Kazal-like domains follow at residues 10-70 and 71-121; these read GGRK…NCDI and ECTQ…QCES. Intrachain disulfides connect C16-C50, C28-C47, C36-C68, C72-C101, C79-C98, and C87-C119.

The protein resides in the secreted. Functionally, this inhibitor is composed of two homologous actively inhibiting halves: one which inhibits trypsin, the other which inhibits elastase. The polypeptide is Double-headed protease inhibitor, submandibular gland (Meles meles (Eurasian badger)).